A 306-amino-acid polypeptide reads, in one-letter code: Homoserine kinase (306 aa).

An ATP-binding site is contributed by 90–100 (PLARGLGSSAS).

It belongs to the GHMP kinase family. Homoserine kinase subfamily.

It is found in the cytoplasm. It carries out the reaction L-homoserine + ATP = O-phospho-L-homoserine + ADP + H(+). It functions in the pathway amino-acid biosynthesis; L-threonine biosynthesis; L-threonine from L-aspartate: step 4/5. In terms of biological role, catalyzes the ATP-dependent phosphorylation of L-homoserine to L-homoserine phosphate. The sequence is that of Homoserine kinase from Staphylococcus epidermidis (strain ATCC 12228 / FDA PCI 1200).